Consider the following 837-residue polypeptide: Protein translocase subunit SecA (837 aa).

Residues Gln-85, 103 to 107 (GEGKT), and Asp-493 each bind ATP. The Zn(2+) site is built by Cys-821, Cys-823, Cys-832, and His-833.

The protein belongs to the SecA family. In terms of assembly, monomer and homodimer. Part of the essential Sec protein translocation apparatus which comprises SecA, SecYEG and auxiliary proteins SecDF. Other proteins may also be involved. The cofactor is Zn(2+).

The protein resides in the cell membrane. Its subcellular location is the cytoplasm. It carries out the reaction ATP + H2O + cellular proteinSide 1 = ADP + phosphate + cellular proteinSide 2.. Its function is as follows. Part of the Sec protein translocase complex. Interacts with the SecYEG preprotein conducting channel. Has a central role in coupling the hydrolysis of ATP to the transfer of proteins into and across the cell membrane, serving as an ATP-driven molecular motor driving the stepwise translocation of polypeptide chains across the membrane. This Streptococcus pneumoniae (strain P1031) protein is Protein translocase subunit SecA.